We begin with the raw amino-acid sequence, 162 residues long: 2-C-methyl-D-erythritol 2,4-cyclodiphosphate synthase (162 aa).

Residues Asp-10 and His-12 each coordinate a divalent metal cation. Residues 10 to 12 (DVH) and 36 to 37 (HS) contribute to the 4-CDP-2-C-methyl-D-erythritol 2-phosphate site. His-44 serves as a coordination point for a divalent metal cation. Residues 58–60 (DIG), 63–67 (FSDTD), and Arg-144 contribute to the 4-CDP-2-C-methyl-D-erythritol 2-phosphate site.

The protein belongs to the IspF family. In terms of assembly, homotrimer. It depends on a divalent metal cation as a cofactor.

It carries out the reaction 4-CDP-2-C-methyl-D-erythritol 2-phosphate = 2-C-methyl-D-erythritol 2,4-cyclic diphosphate + CMP. It functions in the pathway isoprenoid biosynthesis; isopentenyl diphosphate biosynthesis via DXP pathway; isopentenyl diphosphate from 1-deoxy-D-xylulose 5-phosphate: step 4/6. Its function is as follows. Involved in the biosynthesis of isopentenyl diphosphate (IPP) and dimethylallyl diphosphate (DMAPP), two major building blocks of isoprenoid compounds. Catalyzes the conversion of 4-diphosphocytidyl-2-C-methyl-D-erythritol 2-phosphate (CDP-ME2P) to 2-C-methyl-D-erythritol 2,4-cyclodiphosphate (ME-CPP) with a corresponding release of cytidine 5-monophosphate (CMP). The protein is 2-C-methyl-D-erythritol 2,4-cyclodiphosphate synthase of Burkholderia thailandensis (strain ATCC 700388 / DSM 13276 / CCUG 48851 / CIP 106301 / E264).